The sequence spans 295 residues: Undecaprenyl-diphosphatase (295 aa).

6 consecutive transmembrane segments (helical) span residues 39 to 59 (PGAA…LLYF), 97 to 117 (WYII…QHAI), 121 to 141 (LRNL…LWIV), 198 to 218 (AFLM…VKAI), 232 to 252 (ATIA…IGFL), and 263 to 283 (FAIY…CGVL).

Belongs to the UppP family.

Its subcellular location is the cell membrane. The enzyme catalyses di-trans,octa-cis-undecaprenyl diphosphate + H2O = di-trans,octa-cis-undecaprenyl phosphate + phosphate + H(+). Catalyzes the dephosphorylation of undecaprenyl diphosphate (UPP). Confers resistance to bacitracin. This Bifidobacterium animalis subsp. lactis (strain AD011) protein is Undecaprenyl-diphosphatase.